The sequence spans 451 residues: Eukaryotic translation initiation factor 3 subunit E (451 aa).

The region spanning 245–425 is the PCI domain; the sequence is PFFNHEPARD…GTVVMNHPPS (181 aa).

It belongs to the eIF-3 subunit E family. As to quaternary structure, component of the eukaryotic translation initiation factor 3 (eIF-3) complex.

Its subcellular location is the cytoplasm. In terms of biological role, component of the eukaryotic translation initiation factor 3 (eIF-3) complex, which is involved in protein synthesis of a specialized repertoire of mRNAs and, together with other initiation factors, stimulates binding of mRNA and methionyl-tRNAi to the 40S ribosome. The eIF-3 complex specifically targets and initiates translation of a subset of mRNAs involved in cell proliferation. This chain is Eukaryotic translation initiation factor 3 subunit E (int6), found in Sclerotinia sclerotiorum (strain ATCC 18683 / 1980 / Ss-1) (White mold).